The chain runs to 163 residues: Shikimate kinase (163 aa).

10-15 serves as a coordination point for ATP; that stretch reads GVGKTT. Position 14 (threonine 14) interacts with Mg(2+). 3 residues coordinate substrate: aspartate 28, arginine 52, and glycine 75. Residue arginine 116 coordinates ATP. Residue arginine 134 coordinates substrate. Arginine 151 serves as a coordination point for ATP.

Belongs to the shikimate kinase family. Monomer. Requires Mg(2+) as cofactor.

It localises to the cytoplasm. It carries out the reaction shikimate + ATP = 3-phosphoshikimate + ADP + H(+). Its pathway is metabolic intermediate biosynthesis; chorismate biosynthesis; chorismate from D-erythrose 4-phosphate and phosphoenolpyruvate: step 5/7. Its function is as follows. Catalyzes the specific phosphorylation of the 3-hydroxyl group of shikimic acid using ATP as a cosubstrate. The chain is Shikimate kinase from Streptococcus pyogenes serotype M4 (strain MGAS10750).